Reading from the N-terminus, the 671-residue chain is DNA ligase (671 aa).

NAD(+) contacts are provided by residues 31 to 35, 80 to 81, and E110; these read DAEYD and SL. K112 functions as the N6-AMP-lysine intermediate in the catalytic mechanism. Positions 133, 167, 283, and 307 each coordinate NAD(+). Zn(2+)-binding residues include C401, C404, C419, and C424. The BRCT domain maps to 587 to 671; sequence EEELVFAGKT…YLPDEGGLNE (85 aa).

This sequence belongs to the NAD-dependent DNA ligase family. LigA subfamily. Mg(2+) is required as a cofactor. The cofactor is Mn(2+).

The catalysed reaction is NAD(+) + (deoxyribonucleotide)n-3'-hydroxyl + 5'-phospho-(deoxyribonucleotide)m = (deoxyribonucleotide)n+m + AMP + beta-nicotinamide D-nucleotide.. DNA ligase that catalyzes the formation of phosphodiester linkages between 5'-phosphoryl and 3'-hydroxyl groups in double-stranded DNA using NAD as a coenzyme and as the energy source for the reaction. It is essential for DNA replication and repair of damaged DNA. The sequence is that of DNA ligase from Listeria innocua serovar 6a (strain ATCC BAA-680 / CLIP 11262).